Reading from the N-terminus, the 196-residue chain is Endoribonuclease YbeY (196 aa).

Zn(2+)-binding residues include histidine 120, histidine 124, and histidine 130.

Belongs to the endoribonuclease YbeY family. Zn(2+) serves as cofactor.

The protein resides in the cytoplasm. Single strand-specific metallo-endoribonuclease involved in late-stage 70S ribosome quality control and in maturation of the 3' terminus of the 16S rRNA. This chain is Endoribonuclease YbeY, found in Corynebacterium glutamicum (strain ATCC 13032 / DSM 20300 / JCM 1318 / BCRC 11384 / CCUG 27702 / LMG 3730 / NBRC 12168 / NCIMB 10025 / NRRL B-2784 / 534).